A 490-amino-acid polypeptide reads, in one-letter code: Betaine aldehyde dehydrogenase (490 aa).

Ile-27 and Asp-93 together coordinate K(+). 150–152 provides a ligand contact to NAD(+); the sequence is GAW. Lys-162 acts as the Charge relay system in catalysis. NAD(+) is bound at residue 176–179; that stretch reads KPSE. Residue Val-180 coordinates K(+). NAD(+) is bound at residue 230 to 233; it reads GTTT. Residue Leu-246 coordinates K(+). The Proton acceptor role is filled by Glu-252. Gly-254, Cys-286, and Glu-387 together coordinate NAD(+). The active-site Nucleophile is Cys-286. At Cys-286 the chain carries Cysteine sulfenic acid (-SOH). K(+) is bound by residues Lys-457 and Gly-460. The active-site Charge relay system is the Glu-464.

This sequence belongs to the aldehyde dehydrogenase family. Dimer of dimers. It depends on K(+) as a cofactor.

It carries out the reaction betaine aldehyde + NAD(+) + H2O = glycine betaine + NADH + 2 H(+). It functions in the pathway amine and polyamine biosynthesis; betaine biosynthesis via choline pathway; betaine from betaine aldehyde: step 1/1. Its function is as follows. Involved in the biosynthesis of the osmoprotectant glycine betaine. Catalyzes the irreversible oxidation of betaine aldehyde to the corresponding acid. This chain is Betaine aldehyde dehydrogenase, found in Pseudomonas entomophila (strain L48).